The following is a 1940-amino-acid chain: Myosin-3 (1940 aa).

The region spanning Asp33–Pro82 is the Myosin N-terminal SH3-like domain. The 694-residue stretch at Asp86–Asp779 folds into the Myosin motor domain. Lys130 is modified (N6,N6,N6-trimethyllysine). Position 179 to 186 (Gly179 to Thr186) interacts with ATP. 2 actin-binding regions span residues Leu656 to Glu678 and Lys758 to Gly772. Residues Leu782–Ser811 form the IQ domain. Residues Leu840–Met1933 adopt a coiled-coil conformation.

This sequence belongs to the TRAFAC class myosin-kinesin ATPase superfamily. Myosin family. In terms of assembly, muscle myosin is a hexameric protein that consists of 2 heavy chain subunits (MHC), 2 alkali light chain subunits (MLC) and 2 regulatory light chain subunits (MLC-2). Expressed in fetal bone, thymus, placenta, heart, brain, and liver.

Its subcellular location is the cytoplasm. The protein resides in the myofibril. In terms of biological role, muscle contraction. The polypeptide is Myosin-3 (MYH3) (Homo sapiens (Human)).